Consider the following 241-residue polypeptide: DnaJ homolog subfamily B member 6 (241 aa).

The interaction with HSP70 stretch occupies residues 2–146; that stretch reads VDYYEVLGVQ…TGSFFSAFSG (145 aa). Positions 3–69 constitute a J domain; sequence DYYEVLGVQR…KKRDIYDKYG (67 aa). Residues 119-241 are interaction with KRT18; that stretch reads FEDFFGNRRG…KEQLLRLDNK (123 aa). At Arg-135 the chain carries Omega-N-methylarginine.

Homooligomer. Interacts with BAG3, HSPB8 and STUB1. Interacts with ALKBH1. Interacts with HSP70, KRT18 and PTTG.

The protein resides in the cytoplasm. Its subcellular location is the perinuclear region. It localises to the nucleus. The protein localises to the myofibril. It is found in the sarcomere. The protein resides in the z line. Functionally, has a stimulatory effect on the ATPase activity of HSP70 in a dose-dependent and time-dependent manner and hence acts as a co-chaperone of HSP70. Plays an indispensable role in the organization of KRT8/KRT18 filaments. Acts as an endogenous molecular chaperone for neuronal proteins including huntingtin. Suppresses aggregation and toxicity of polyglutamine-containing, aggregation-prone proteins. Also reduces cellular toxicity and caspase-3 activity. This chain is DnaJ homolog subfamily B member 6, found in Macaca fascicularis (Crab-eating macaque).